A 174-amino-acid chain; its full sequence is Bifunctional protein PyrR (174 aa).

Substrate contacts are provided by residues 38-39, 95-103, and Arg-128; these read SG and DDVLATGRT. The PRPP-binding signature appears at 91-103; the sequence is ILLVDDVLATGRT.

Belongs to the purine/pyrimidine phosphoribosyltransferase family. PyrR subfamily.

It catalyses the reaction UMP + diphosphate = 5-phospho-alpha-D-ribose 1-diphosphate + uracil. Regulates the transcription of the pyrimidine nucleotide (pyr) operon in response to exogenous pyrimidines. Its function is as follows. Also displays a weak uracil phosphoribosyltransferase activity which is not physiologically significant. The protein is Bifunctional protein PyrR of Ralstonia nicotianae (strain ATCC BAA-1114 / GMI1000) (Ralstonia solanacearum).